Reading from the N-terminus, the 1058-residue chain is Carbamoyl phosphate synthase large chain (1058 aa).

The segment at 1–401 (MSKRKDIQKI…SLLKACRSLE (401 aa)) is carboxyphosphate synthetic domain. Residues arginine 129, arginine 169, glycine 175, glycine 176, arginine 208, isoleucine 210, glutamate 215, glycine 241, isoleucine 242, histidine 243, glutamine 284, and glutamate 298 each coordinate ATP. The 195-residue stretch at 133–327 (KQLMQELDQP…IAKLAAKIAV (195 aa)) folds into the ATP-grasp 1 domain. Mg(2+) is bound by residues glutamine 284, glutamate 298, and asparagine 300. Glutamine 284, glutamate 298, and asparagine 300 together coordinate Mn(2+). The oligomerization domain stretch occupies residues 402-546 (IGVCHNEMTS…YSTYELENES (145 aa)). The interval 547-929 (VQSNKESILV…ALYKAFEANN (383 aa)) is carbamoyl phosphate synthetic domain. The ATP-grasp 2 domain occupies 671 to 861 (EKALKELGIP…MAQIATKLIL (191 aa)). Residues arginine 707, serine 746, isoleucine 748, glutamate 752, glycine 777, valine 778, histidine 779, serine 780, glutamine 820, and glutamate 832 each contribute to the ATP site. Mg(2+) contacts are provided by glutamine 820, glutamate 832, and asparagine 834. Residues glutamine 820, glutamate 832, and asparagine 834 each coordinate Mn(2+). One can recognise an MGS-like domain in the interval 930-1058 (SHLSEFGQIV…ESRCFNIEAI (129 aa)). Residues 930–1058 (SHLSEFGQIV…ESRCFNIEAI (129 aa)) are allosteric domain.

The protein belongs to the CarB family. As to quaternary structure, composed of two chains; the small (or glutamine) chain promotes the hydrolysis of glutamine to ammonia, which is used by the large (or ammonia) chain to synthesize carbamoyl phosphate. Tetramer of heterodimers (alpha,beta)4. Mg(2+) serves as cofactor. The cofactor is Mn(2+).

The enzyme catalyses hydrogencarbonate + L-glutamine + 2 ATP + H2O = carbamoyl phosphate + L-glutamate + 2 ADP + phosphate + 2 H(+). The catalysed reaction is hydrogencarbonate + NH4(+) + 2 ATP = carbamoyl phosphate + 2 ADP + phosphate + 2 H(+). It participates in amino-acid biosynthesis; L-arginine biosynthesis; carbamoyl phosphate from bicarbonate: step 1/1. Its pathway is pyrimidine metabolism; UMP biosynthesis via de novo pathway; (S)-dihydroorotate from bicarbonate: step 1/3. Its function is as follows. Large subunit of the glutamine-dependent carbamoyl phosphate synthetase (CPSase). CPSase catalyzes the formation of carbamoyl phosphate from the ammonia moiety of glutamine, carbonate, and phosphate donated by ATP, constituting the first step of 2 biosynthetic pathways, one leading to arginine and/or urea and the other to pyrimidine nucleotides. The large subunit (synthetase) binds the substrates ammonia (free or transferred from glutamine from the small subunit), hydrogencarbonate and ATP and carries out an ATP-coupled ligase reaction, activating hydrogencarbonate by forming carboxy phosphate which reacts with ammonia to form carbamoyl phosphate. The sequence is that of Carbamoyl phosphate synthase large chain from Streptococcus pyogenes serotype M5 (strain Manfredo).